The sequence spans 578 residues: Arginine--tRNA ligase (578 aa).

Residues 127 to 137 carry the 'HIGH' region motif; the sequence is PNLAKEMHVGH.

Belongs to the class-I aminoacyl-tRNA synthetase family. As to quaternary structure, monomer.

It localises to the cytoplasm. The enzyme catalyses tRNA(Arg) + L-arginine + ATP = L-arginyl-tRNA(Arg) + AMP + diphosphate. In Pseudomonas entomophila (strain L48), this protein is Arginine--tRNA ligase.